The following is a 287-amino-acid chain: Cyclopropane mycolic acid synthase MmaA2 (287 aa).

S-adenosyl-L-methionine-binding positions include 33 to 34 (YS), 72 to 74 (GCG), 94 to 99 (TLSKNQ), 123 to 124 (WE), and Ile136. Residue Cys269 is part of the active site.

Belongs to the CFA/CMAS family.

The enzyme catalyses a 1-acyl-2-(9Z)-enoyl-sn-glycero-3-phospholipid + S-adenosyl-L-methionine = a 1-acyl-2-(9-cyclopronane)-acyl-sn-glycero-3-phospholipid + S-adenosyl-L-homocysteine + H(+). The protein operates within lipid metabolism; mycolic acid biosynthesis. In terms of biological role, catalyzes the conversion of a double bond to a cis cyclopropane ring at the distal position of an alpha mycolic acid via the transfer of a methylene group from S-adenosyl-L-methionine. MmaA2 also catalyzes the biosynthesis of the cis-cyclopropanated methoxymycolates. Cyclopropanated mycolic acids are key factors participating in cell envelope permeability, host immunomodulation and persistence. This chain is Cyclopropane mycolic acid synthase MmaA2 (mmaA2), found in Mycobacterium tuberculosis (strain ATCC 25177 / H37Ra).